Reading from the N-terminus, the 99-residue chain is Gibberellin-regulated protein 3 (99 aa).

The first 26 residues, 1–26, serve as a signal peptide directing secretion; that stretch reads MAIFRSTLVLLLILFCLTTFELHVHA.

This sequence belongs to the GASA family. Six disulfide bonds may be present. As to expression, expressed in siliques, dry seeds and vasculature of roots and rosette leaves.

It localises to the secreted. Functionally, gibberellin-regulated protein that may function in hormonal controlled steps of development such as seed germination, flowering and seed maturation. The protein is Gibberellin-regulated protein 3 (GASA3) of Arabidopsis thaliana (Mouse-ear cress).